We begin with the raw amino-acid sequence, 417 residues long: Cobalamin binding intrinsic factor (417 aa).

The N-terminal stretch at 1–22 (MAWFSLHLLHLLWAAAGTSTWA) is a signal peptide. Cystine bridges form between C26–C246, C103–C288, and C143–C182. N100 carries N-linked (GlcNAc...) asparagine glycosylation. Residue D171 participates in cob(II)alamin binding. S191 is modified (phosphoserine). N209 is a glycosylation site (N-linked (GlcNAc...) asparagine). Residues D222 and Q270 each contribute to the cob(II)alamin site. N-linked (GlcNAc...) asparagine glycans are attached at residues N311 and N330. Cob(II)alamin contacts are provided by residues 365–370 (SWGLVV) and 386–395 (WQFLSGKTPL). Residue N413 is glycosylated (N-linked (GlcNAc...) asparagine).

The protein belongs to the eukaryotic cobalamin transport proteins family. As to quaternary structure, interacts with CUBN (via CUB domains).

The protein localises to the secreted. Its function is as follows. Promotes absorption of the essential vitamin cobalamin (Cbl) in the ileum. After interaction with CUBN, the CBLIF-cobalamin complex is internalized via receptor-mediated endocytosis. In Canis lupus familiaris (Dog), this protein is Cobalamin binding intrinsic factor (CBLIF).